Here is a 389-residue protein sequence, read N- to C-terminus: Serpin-Z3 (389 aa).

Residues 337–361 form an RCL region; that stretch reads GTEAAAVSVAIMMPQCLMRNPDFVA.

It belongs to the serpin family.

In terms of biological role, probable serine protease inhibitor. The sequence is that of Serpin-Z3 from Arabidopsis thaliana (Mouse-ear cress).